Consider the following 494-residue polypeptide: UPF0371 protein SPJ_0333 (494 aa).

It belongs to the UPF0371 family.

The protein is UPF0371 protein SPJ_0333 of Streptococcus pneumoniae (strain JJA).